Consider the following 98-residue polypeptide: Large ribosomal subunit protein uL23 (98 aa).

It belongs to the universal ribosomal protein uL23 family. As to quaternary structure, part of the 50S ribosomal subunit. Contacts protein L29, and trigger factor when it is bound to the ribosome.

Functionally, one of the early assembly proteins it binds 23S rRNA. One of the proteins that surrounds the polypeptide exit tunnel on the outside of the ribosome. Forms the main docking site for trigger factor binding to the ribosome. The sequence is that of Large ribosomal subunit protein uL23 from Lactobacillus gasseri (strain ATCC 33323 / DSM 20243 / BCRC 14619 / CIP 102991 / JCM 1131 / KCTC 3163 / NCIMB 11718 / NCTC 13722 / AM63).